The sequence spans 404 residues: MVYQPAAGARDLLPLDVAQKRWIEDKLQQVFHRWGYHRIITSTLERMDTLMAGEAIQRQMVIQLQNSEDEELGLRPELTASIARAVVTRMTNLRHPQRLYYNANVFRRIWENRHNRQQEFYQAGVELLGVGGLLANAEVLLLAGNCLTALGLQDWHLILGEAGITRSLLDAFPINLRAKVRSAIAHLDRITIDTLPLTDELRERARIMLDLRGNSTDVLQKVSSLNLDAEQQEAVNNLQSLVELLESGGKFPIILDLSLIQTIDYYTGIVFEIVNNTDSQARVLGRGGRYDQLLGLYHPQGENIPGIGFVLNIEDLYQVLLTTQQLPQETPASDWLVVPENPKAHSAAFAHAQKLRESPDLVRVELDLGGTDIPAIQQYARDRRIAQIAWIKADGSLIIEKVSQ.

Belongs to the class-II aminoacyl-tRNA synthetase family. HisZ subfamily. In terms of assembly, heteromultimer composed of HisG and HisZ subunits.

The protein localises to the cytoplasm. Its pathway is amino-acid biosynthesis; L-histidine biosynthesis; L-histidine from 5-phospho-alpha-D-ribose 1-diphosphate: step 1/9. Required for the first step of histidine biosynthesis. May allow the feedback regulation of ATP phosphoribosyltransferase activity by histidine. This Trichormus variabilis (strain ATCC 29413 / PCC 7937) (Anabaena variabilis) protein is ATP phosphoribosyltransferase regulatory subunit.